The chain runs to 807 residues: MNRASPAVKTESNPLSTDELRKIDAYWRAANYLSVGQIYLLDNPLLKEPLTVTHIKPRLLGHWGTCPGLSFIYAHLNRIIKKFDLDMFYVCGPGHGGPAMVANTWLEGSYSEFYPRISRDATGMKRLFRQFSFPGGIPSHVAPETAGSINEGGELGYSLSHAFGAAFDNPDLIVACVVGDGEAETGPLAASWHSNKFLNPARDGAVLPILHLNGYKIANPTILARISHEELESLFAGYGYQPYFVEGSDPGPMHQSMAAVLDTAIESIRRIQREARSRGVNSGERQEAVTYPRWPLIILRSPKGWTGPEEVDGKKLEDYWRSHQVPLAELGSKPDHLKQLEDWMRSYKPEELFDENGCLMPELAALAPEGDRRMGANPHANGGLLLKELEMPDFRSYAVDVPVPGTEVREATRETGKFLRDIMKLNLDSSNFRVMGPDETSSNRLDALFDVTARAWVAQQLPEDEHLSPDGRVMEILSEHICQGWLEGYLLTGRHGLFSCYEAFIHIVDSMFNQHAKWLKVSKEIPWRRPIASLNYLLTSHVWRQDHNGFSHQDPGFIDLVVNKKASIIRVYLPPDANTLLYITDKCLRSRNFINVIVAGKQPALQWLDMDAAIRHGSAGIGIWGWASNDQEDEPDVVMACAGDIPTLETLAAVDLLRRHVPELRIRVVNIVDLMTLQPRSEHPDGLSDWDFDTLFTTNKPIIFAYHGYPWLIHRLTYRRTNHPNLHVRGYKEEGTTTTPFDMTVLNDLDRFHLVMDVADRVPKLSSKGAYLKQLMRDKLIDHKRYIRQYGEDMPEIRDWHWPSPGS.

The protein belongs to the XFP family. Requires thiamine diphosphate as cofactor.

In Nitrosospira multiformis (strain ATCC 25196 / NCIMB 11849 / C 71), this protein is Probable phosphoketolase.